The sequence spans 235 residues: MGIGKSKINSCPLSLSWGKRHSVDTSPGYHESDSKKSEDLSLCNVAEHSNTTEGPTGKQEGAQSVEEMFEEEAEEEVFLKFVILHAEDDTDEALRVQNLLQDDFGIKPGIIFAEMPCGRQHLQNLDDAVNGSAWTILLLTENFLRDTWCNFQFYTSLMNSVNRQHKYNSVIPMRPLNNPLPRERTPFALQTINALEEESRGFPTQVERIFQESVYKTQQTIWKETRNMVQRQFIA.

The interval 1–39 is disordered; sequence MGIGKSKINSCPLSLSWGKRHSVDTSPGYHESDSKKSED. Gly2 is lipidated: N-myristoyl glycine. At Ser16 the chain carries Phosphoserine; by PKC/PRKCE. A compositionally biased stretch (basic and acidic residues) spans 30–39; that stretch reads HESDSKKSED. Residues 73 to 229 enclose the TIR domain; sequence AEEEVFLKFV…TIWKETRNMV (157 aa). Tyr167 bears the Phosphotyrosine mark.

Homodimer. Interacts with TLR4, TICAM1, IRF3 and IRF7 in response to LPS. Interacts with IL1R1, IL1RAP, IRAK2, IRAK3 and TRAF6. Interacts with protein kinase-inactive mutants of IRAK1 and IRAK4. Isoform 1 interacts with isoform 2; the interaction occurs in late endosomes and disrupts the interaction between isoform 1 and TICAM1. Interacts with MYD88; the interaction decreases after IL-18 stimulation in a time-dependent manner. Interacts with IL18R1 and IL18RAP. Interacts with TLR2. Interacts with RAB11FIP2. In terms of processing, phosphorylated by PRKCE in response to LPS. Phosphorylation is essential for its function. It is depleted from the membrane upon phosphorylation. Tyrosine phosphorylation is inhibited by phosphatase PTPN4. Isoform 1 is myristoylated. Required for membrane association which is critical for its ability to initiate efficient signaling. Expressed in spleen, prostate, testis, uterus, small intestine, colon, peripheral blood leukocytes, heart, placenta, lung, liver, skeletal muscle, and pancreas Isoform 2 is ubiquitously expressed (at lower levels than isoform 1).

The protein resides in the cytoplasm. Its subcellular location is the golgi apparatus. It localises to the cell membrane. It is found in the endoplasmic reticulum. The protein localises to the early endosome membrane. The protein resides in the late endosome membrane. Its subcellular location is the cell projection. It localises to the phagocytic cup. In terms of biological role, functions as a sorting adapter in different signaling pathways to facilitate downstream signaling leading to type I interferon induction. In TLR4 signaling, physically bridges TLR4 and TICAM1 and functionally transmits signal to TICAM1 in early endosomes after endocytosis of TLR4. In TLR2 signaling, physically bridges TLR2 and MYD88 and is required for the TLR2-dependent movement of MYD88 to endosomes following ligand engagement. Involved in IL-18 signaling and is proposed to function as a sorting adapter for MYD88 in IL-18 signaling during adaptive immune response. Forms a complex with RAB11FIP2 that is recruited to the phagosomes to promote the activation of the actin-regulatory GTPases RAC1 and CDC42 and subsequent phagocytosis of Gram-negative bacteria. Its function is as follows. Proposed to inhibit LPS-TLR4 signaling at the late endosome by interaction with isoform 1 thereby disrupting the association of isoform 1 with TICAM1. May be involved in TLR4 degradation in late endosomes. The chain is TIR domain-containing adapter molecule 2 (TICAM2) from Homo sapiens (Human).